We begin with the raw amino-acid sequence, 156 residues long: Small ribosomal subunit protein uS7 (156 aa).

Belongs to the universal ribosomal protein uS7 family. As to quaternary structure, part of the 30S ribosomal subunit. Contacts proteins S9 and S11.

Functionally, one of the primary rRNA binding proteins, it binds directly to 16S rRNA where it nucleates assembly of the head domain of the 30S subunit. Is located at the subunit interface close to the decoding center, probably blocks exit of the E-site tRNA. This Kocuria rhizophila (strain ATCC 9341 / DSM 348 / NBRC 103217 / DC2201) protein is Small ribosomal subunit protein uS7.